The primary structure comprises 644 residues: Phosphomethylpyrimidine synthase (644 aa).

Substrate-binding positions include N236, M265, Y294, H330, 350–352 (SRG), 391–394 (DGLR), and E430. Position 434 (H434) interacts with Zn(2+). Y457 serves as a coordination point for substrate. H498 serves as a coordination point for Zn(2+). [4Fe-4S] cluster is bound by residues C578, C581, and C586. The disordered stretch occupies residues 623–644 (RQKSEEFKASGSELYHPAVEAE).

Belongs to the ThiC family. Homodimer. It depends on [4Fe-4S] cluster as a cofactor.

The enzyme catalyses 5-amino-1-(5-phospho-beta-D-ribosyl)imidazole + S-adenosyl-L-methionine = 4-amino-2-methyl-5-(phosphooxymethyl)pyrimidine + CO + 5'-deoxyadenosine + formate + L-methionine + 3 H(+). It participates in cofactor biosynthesis; thiamine diphosphate biosynthesis. In terms of biological role, catalyzes the synthesis of the hydroxymethylpyrimidine phosphate (HMP-P) moiety of thiamine from aminoimidazole ribotide (AIR) in a radical S-adenosyl-L-methionine (SAM)-dependent reaction. This chain is Phosphomethylpyrimidine synthase, found in Aliivibrio fischeri (strain MJ11) (Vibrio fischeri).